A 366-amino-acid polypeptide reads, in one-letter code: Isocitrate dehydrogenase [NAD] subunit alpha, mitochondrial (366 aa).

The N-terminal 27 residues, 1–27 (MAGSAWVSKVSRLLGAFHNTKQVTRGF), are a transit peptide targeting the mitochondrion. Position 77 is an N6-succinyllysine (Lys-77). Residue Thr-101 is modified to Phosphothreonine. Substrate contacts are provided by Arg-115, Arg-125, and Arg-146. An N6-acetyllysine modification is found at Lys-223. Residues Asp-233, Asp-257, and Asp-261 each contribute to the Mg(2+) site. Residue Lys-343 is modified to N6-acetyllysine; alternate. An N6-succinyllysine; alternate modification is found at Lys-343. Lys-350 is subject to N6-succinyllysine.

Belongs to the isocitrate and isopropylmalate dehydrogenases family. In terms of assembly, heterooligomer of subunits alpha (IDH3A), beta (IDH3B), and gamma (IDH3G) in the apparent ratio of 2:1:1. The heterodimer containing one IDH3A and one IDH3B subunit and the heterodimer containing one IDH3A and one IDH3G subunit assemble into a heterotetramer (which contains two subunits of IDH3A, one of IDH3B and one of IDH3G) and further into the heterooctamer. It depends on Mg(2+) as a cofactor. Mn(2+) serves as cofactor. In terms of tissue distribution, expressed in brown adipose tissue (BAT).

It localises to the mitochondrion. It carries out the reaction D-threo-isocitrate + NAD(+) = 2-oxoglutarate + CO2 + NADH. The heterotetramer and the heterodimer composed of IDH3A and IDH3G subunits can be allosterically activated by citrate (CIT) or/and ADP, and the two activators can act independently or synergistically. The heterodimer composed of IDH3A and IDH3B subunits cannot be allosterically regulated and the allosteric regulation of the heterotetramer is through the IDH3G subunit and not the IDH3B subunit. The IDH3G subunit contains the allosteric site which consists of a CIT-binding site and an ADP-binding site, and the binding of CIT and ADP causes conformational changes at the allosteric site which are transmitted to the active site in the catalytic subunit (IDH3A) through a cascade of conformational changes at the heterodimer interface, leading to stabilization of the isocitrate-binding at the active site and thus activation of the enzyme. ATP can activate the heterotetramer and the heterodimer composed of IDH3A and IDH3G subunits at low concentrations but inhibits their activities at high concentrations, whereas ATP exhibits only inhibitory effect on the heterodimer composed of IDH3A and IDH3B subunits. Functionally, catalytic subunit of the enzyme which catalyzes the decarboxylation of isocitrate (ICT) into alpha-ketoglutarate. The heterodimer composed of the alpha (IDH3A) and beta (IDH3B) subunits and the heterodimer composed of the alpha (IDH3A) and gamma (IDH3G) subunits, have considerable basal activity but the full activity of the heterotetramer (containing two subunits of IDH3A, one of IDH3B and one of IDH3G) requires the assembly and cooperative function of both heterodimers. The protein is Isocitrate dehydrogenase [NAD] subunit alpha, mitochondrial of Rattus norvegicus (Rat).